The chain runs to 119 residues: Methylglyoxal synthase (119 aa).

Residues 1–119 (MKIALIAHDK…KTAELIIKQF (119 aa)) form the MGS-like domain. Residues histidine 8, lysine 12, 34 to 37 (TGTT), and 54 to 55 (SG) contribute to the substrate site. The active-site Proton donor/acceptor is aspartate 60. Residue histidine 87 participates in substrate binding.

Belongs to the methylglyoxal synthase family.

It carries out the reaction dihydroxyacetone phosphate = methylglyoxal + phosphate. Functionally, catalyzes the formation of methylglyoxal from dihydroxyacetone phosphate. This chain is Methylglyoxal synthase, found in Clostridium beijerinckii (strain ATCC 51743 / NCIMB 8052) (Clostridium acetobutylicum).